The sequence spans 286 residues: Quinone oxidoreductase 2 (286 aa).

NADP(+) contacts are provided by residues 6–11 (GATGQL), Arg-33, 73–75 (SSS), 138–143 (GWYSEN), and Arg-171.

Belongs to the NmrA-type oxidoreductase family. As to quaternary structure, monomer.

It carries out the reaction a quinone + NADH + H(+) = a quinol + NAD(+). It catalyses the reaction a quinone + NADPH + H(+) = a quinol + NADP(+). In terms of biological role, quinone oxidoreductase that may play some additional role beyond quinone reduction. Potential redox sensor protein. Overexpression induces retardation of growth. The chain is Quinone oxidoreductase 2 (qorB) from Escherichia coli (strain K12).